A 729-amino-acid polypeptide reads, in one-letter code: Alpha-galactosidase AgaA (729 aa).

Substrate-binding positions include Asp53, Trp199, 366 to 367 (DD), Arg443, 476 to 480 (KWDMN), Cys526, and Asp548. The Nucleophile role is filled by Asp478. The active-site Proton donor is the Asp548.

This sequence belongs to the glycosyl hydrolase 36 family. As to quaternary structure, homotetramer.

The catalysed reaction is Hydrolysis of terminal, non-reducing alpha-D-galactose residues in alpha-D-galactosides, including galactose oligosaccharides, galactomannans and galactolipids.. With respect to regulation, not inhibited by D-galactose or sucrose. Inhibited by pharmaceutical drug 1-deoxygalactonojirimycin. Functionally, hydrolyzes the short-chain alpha-galactosaccharides raffinose and stachyose. The sequence is that of Alpha-galactosidase AgaA from Geobacillus stearothermophilus (Bacillus stearothermophilus).